Consider the following 231-residue polypeptide: 2-C-methyl-D-erythritol 4-phosphate cytidylyltransferase (231 aa).

This sequence belongs to the IspD/TarI cytidylyltransferase family. IspD subfamily.

It catalyses the reaction 2-C-methyl-D-erythritol 4-phosphate + CTP + H(+) = 4-CDP-2-C-methyl-D-erythritol + diphosphate. The protein operates within isoprenoid biosynthesis; isopentenyl diphosphate biosynthesis via DXP pathway; isopentenyl diphosphate from 1-deoxy-D-xylulose 5-phosphate: step 2/6. Its function is as follows. Catalyzes the formation of 4-diphosphocytidyl-2-C-methyl-D-erythritol from CTP and 2-C-methyl-D-erythritol 4-phosphate (MEP). The protein is 2-C-methyl-D-erythritol 4-phosphate cytidylyltransferase of Rubrobacter xylanophilus (strain DSM 9941 / JCM 11954 / NBRC 16129 / PRD-1).